The primary structure comprises 108 residues: Phosphoribosyl-ATP pyrophosphatase (108 aa).

Positions 88–108 (VENELDRREGRSGIEEKASRK) are disordered. Positions 91-108 (ELDRREGRSGIEEKASRK) are enriched in basic and acidic residues.

Belongs to the PRA-PH family.

It is found in the cytoplasm. It catalyses the reaction 1-(5-phospho-beta-D-ribosyl)-ATP + H2O = 1-(5-phospho-beta-D-ribosyl)-5'-AMP + diphosphate + H(+). The protein operates within amino-acid biosynthesis; L-histidine biosynthesis; L-histidine from 5-phospho-alpha-D-ribose 1-diphosphate: step 2/9. In Paracoccus denitrificans (strain Pd 1222), this protein is Phosphoribosyl-ATP pyrophosphatase.